The primary structure comprises 181 residues: Ribosome maturation factor RimM (181 aa).

Residues 99–172 (EDEFYQVDLI…FLIVDPMAAG (74 aa)) form the PRC barrel domain.

It belongs to the RimM family. Binds ribosomal protein uS19.

Its subcellular location is the cytoplasm. Its function is as follows. An accessory protein needed during the final step in the assembly of 30S ribosomal subunit, possibly for assembly of the head region. Essential for efficient processing of 16S rRNA. May be needed both before and after RbfA during the maturation of 16S rRNA. It has affinity for free ribosomal 30S subunits but not for 70S ribosomes. The protein is Ribosome maturation factor RimM of Bartonella tribocorum (strain CIP 105476 / IBS 506).